The sequence spans 239 residues: Ribonuclease PH (239 aa).

Phosphate-binding positions include R86 and 124–126 (GTR).

This sequence belongs to the RNase PH family. As to quaternary structure, homohexameric ring arranged as a trimer of dimers.

The catalysed reaction is tRNA(n+1) + phosphate = tRNA(n) + a ribonucleoside 5'-diphosphate. Its function is as follows. Phosphorolytic 3'-5' exoribonuclease that plays an important role in tRNA 3'-end maturation. Removes nucleotide residues following the 3'-CCA terminus of tRNAs; can also add nucleotides to the ends of RNA molecules by using nucleoside diphosphates as substrates, but this may not be physiologically important. Probably plays a role in initiation of 16S rRNA degradation (leading to ribosome degradation) during starvation. This Sinorhizobium medicae (strain WSM419) (Ensifer medicae) protein is Ribonuclease PH.